The primary structure comprises 771 residues: Probable exo-1,4-beta-xylosidase xlnD (771 aa).

The signal sequence occupies residues 1 to 25; it reads MARIMSWHYGKAITLFVCLGPVALS. An N-linked (GlcNAc...) asparagine glycan is attached at asparagine 67. Residue aspartate 293 is part of the active site. Residues asparagine 305, asparagine 345, asparagine 423, and asparagine 464 are each glycosylated (N-linked (GlcNAc...) asparagine).

This sequence belongs to the glycosyl hydrolase 3 family.

The protein resides in the secreted. It catalyses the reaction Hydrolysis of (1-&gt;4)-beta-D-xylans, to remove successive D-xylose residues from the non-reducing termini.. It functions in the pathway glycan degradation; xylan degradation. Its function is as follows. Xylan 1,4-beta-xylosidase involved in the hydrolysis of xylan, a major structural heterogeneous polysaccharide found in plant biomass representing the second most abundant polysaccharide in the biosphere, after cellulose. This Neosartorya fischeri (strain ATCC 1020 / DSM 3700 / CBS 544.65 / FGSC A1164 / JCM 1740 / NRRL 181 / WB 181) (Aspergillus fischerianus) protein is Probable exo-1,4-beta-xylosidase xlnD (xlnD).